A 107-amino-acid chain; its full sequence is Nucleoid-associated protein Lferr_1592 (107 aa).

This sequence belongs to the YbaB/EbfC family. As to quaternary structure, homodimer.

It localises to the cytoplasm. It is found in the nucleoid. Functionally, binds to DNA and alters its conformation. May be involved in regulation of gene expression, nucleoid organization and DNA protection. The polypeptide is Nucleoid-associated protein Lferr_1592 (Acidithiobacillus ferrooxidans (strain ATCC 53993 / BNL-5-31) (Leptospirillum ferrooxidans (ATCC 53993))).